We begin with the raw amino-acid sequence, 251 residues long: Ribonuclease HII (251 aa).

In terms of domain architecture, RNase H type-2 spans Gly32–Leu223. A divalent metal cation is bound by residues Asp38, Glu39, and Asp132.

The protein belongs to the RNase HII family. The cofactor is Mn(2+). Mg(2+) is required as a cofactor.

The protein localises to the cytoplasm. The catalysed reaction is Endonucleolytic cleavage to 5'-phosphomonoester.. In terms of biological role, endonuclease that specifically degrades the RNA of RNA-DNA hybrids. The protein is Ribonuclease HII of Nocardia farcinica (strain IFM 10152).